The sequence spans 529 residues: MDFTQVPPSYILGVLLSSTSILFCLKYLLRSGYRPPELPSGPTTVPLFGNELQVPKADAHFQFTKWAKQYGGMFSLKRYMNTTIVITDRKLMKSLLDKKSNIYSHRPASLVSHLITQSDHLLVMQYGEEWRMLRKIIHQYFMEPNCEREHWKVQEAEAKQMLHDFLTMPEDHMLHPKRYSNSITNSLVFGIRTATVHDEYMDELFYLMDKWSLVQELGATPPVDSFGLLRILPQWMLGNWKNRAVEVGDLMQALYSKVLDQVRARRQRGVYRDSFMDRVLDNLEKTPLTENQLRFLGGVLMEGGSDTSSSLILTIIQAMTKYPEVQAKAHAQIDAVVGSERSPSWSDFAQLPYINMIIKESHRWRPVSPLGVPHAVAEDDRVNNTLIPKGSTIVLNVWGMHHDPDRWSEPEHFQPDRFADYPALASTYAASGEWDKRDHYGYGAGRRICPGIHLAERNLFIGVAKLLWAFEFSEPLGSRSDISAESGASQGFLHCPKDYGCAIRLRAPEKRETIMREFEEAQGVFSRFD.

Over 1–8 (MDFTQVPP) the chain is Cytoplasmic. A helical membrane pass occupies residues 9–25 (SYILGVLLSSTSILFCL). Residues 26–529 (KYLLRSGYRP…EAQGVFSRFD (504 aa)) are Lumenal-facing. N-linked (GlcNAc...) asparagine glycosylation is found at Asn81 and Asn383. Cys449 lines the heme pocket.

The protein belongs to the cytochrome P450 family. The cofactor is heme.

The protein resides in the endoplasmic reticulum membrane. The catalysed reaction is 3-hydroxybenzyl alcohol + reduced [NADPH--hemoprotein reductase] + O2 = gentisyl alcohol + oxidized [NADPH--hemoprotein reductase] + H2O + H(+). It functions in the pathway mycotoxin biosynthesis; patulin biosynthesis. Functionally, cytochrome P450 monooxygenase; part of the gene cluster that mediates the biosynthesis of patulin, an acetate-derived tetraketide mycotoxin produced by several fungal species that shows antimicrobial properties against several bacteria. PatI catalyzes the conversion of m-hydroxybenzyl alcohol into gentisyl alcohol. The pathway begins with the synthesis of 6-methylsalicylic acid by the polyketide synthase (PKS) patK via condensation of acetate and malonate units. The 6-methylsalicylic acid decarboxylase patG then catalyzes the decarboxylation of 6-methylsalicylic acid to yield m-cresol (also known as 3-methylphenol). These first reactions occur in the cytosol. The intermediate m-cresol is then transported into the endoplasmic reticulum where the cytochrome P450 monooxygenase patH converts it to m-hydroxybenzyl alcohol, which is further converted to gentisyl alcohol by the cytochrome P450 monooxygenase patI. The oxidoreductases patJ and patO further convert gentisyl alcohol to isoepoxydon in the vacuole. PatN catalyzes then the transformation of isoepoxydon into phyllostine. The cluster protein patF is responsible for the conversion from phyllostine to neopatulin whereas the alcohol dehydrogenase patD converts neopatulin to E-ascladiol. The steps between isoepoxydon and E-ascladiol occur in the cytosol, and E-ascladiol is probably secreted to the extracellular space by one of the cluster-specific transporters patC or patM. Finally, the secreted patulin synthase patE catalyzes the conversion of E-ascladiol to patulin. This is Cytochrome P450 monooxygenase patI from Aspergillus clavatus (strain ATCC 1007 / CBS 513.65 / DSM 816 / NCTC 3887 / NRRL 1 / QM 1276 / 107).